Reading from the N-terminus, the 120-residue chain is Spermidine export protein MdtJ (120 aa).

Helical transmembrane passes span 1 to 21, 31 to 51, 54 to 74, and 81 to 101; these read MFYW…TLSM, AGFI…SFAV, IALG…ITIF, and EALS…IVLI.

Belongs to the drug/metabolite transporter (DMT) superfamily. Small multidrug resistance (SMR) (TC 2.A.7.1) family. MdtJ subfamily. As to quaternary structure, forms a complex with MdtI.

Its subcellular location is the cell inner membrane. Its function is as follows. Catalyzes the excretion of spermidine. This Salmonella agona (strain SL483) protein is Spermidine export protein MdtJ.